The chain runs to 380 residues: 3-isopropylmalate dehydratase large subunit 2 (380 aa).

Positions 262, 320, and 323 each coordinate [4Fe-4S] cluster.

Belongs to the aconitase/IPM isomerase family. LeuC type 2 subfamily. Heterodimer of LeuC and LeuD. Requires [4Fe-4S] cluster as cofactor.

It carries out the reaction (2R,3S)-3-isopropylmalate = (2S)-2-isopropylmalate. It functions in the pathway amino-acid biosynthesis; L-leucine biosynthesis; L-leucine from 3-methyl-2-oxobutanoate: step 2/4. In terms of biological role, catalyzes the isomerization between 2-isopropylmalate and 3-isopropylmalate, via the formation of 2-isopropylmaleate. This is 3-isopropylmalate dehydratase large subunit 2 from Pyrococcus furiosus (strain ATCC 43587 / DSM 3638 / JCM 8422 / Vc1).